Here is an 881-residue protein sequence, read N- to C-terminus: Leucine--tRNA ligase (881 aa).

Residues 48 to 58 carry the 'HIGH' region motif; sequence PYPSGKLHMGH. The short motif at 638–642 is the 'KMSKS' region element; the sequence is KMSKS. Lysine 641 is an ATP binding site.

The protein belongs to the class-I aminoacyl-tRNA synthetase family.

Its subcellular location is the cytoplasm. The catalysed reaction is tRNA(Leu) + L-leucine + ATP = L-leucyl-tRNA(Leu) + AMP + diphosphate. This is Leucine--tRNA ligase from Janthinobacterium sp. (strain Marseille) (Minibacterium massiliensis).